A 330-amino-acid polypeptide reads, in one-letter code: MCISKEDEEDPSRNRRNQSPLSLPQTLKHFQKDLLAGAVMGGVVHTIVAPIERAKLLLQTQESNIAIVGDEGHAGKRRFKGMFDFIFRTVREEGVLSLWRGNGSSVLRYYPSVALNFSLKDLYRSILRNSSSQENHIFSGALANFMAGSAAGCTALIVVYPLDIAHTRLAADIGKPEARQFRGIHHFLSTIHKKDGVRGIYRGLPASLHGVIIHRGLYFGGFDTVKEIFSEDTKPELALWKRWGLAQAVTTSAGLASYPLDTVRRRIMMQSGMEHPMYRSTLDCWKKIYRSEGLASFYRGALSNMFRSTGSAAILVFYDEVKRFLNWGGI.

A compositionally biased stretch (acidic residues) spans 1–10 (MCISKEDEED). The tract at residues 1 to 22 (MCISKEDEEDPSRNRRNQSPLS) is disordered. Transmembrane regions (helical) follow at residues 27 to 61 (LKHF…LQTQ), 103 to 127 (GSSV…RSIL), 137 to 171 (IFSG…RLAA), 203 to 230 (GLPA…EIFS), 236 to 270 (ELAL…IMMQ), and 300 to 325 (GALS…KRFL). Solcar repeat units lie at residues 28 to 126 (KHFQ…YRSI), 139 to 228 (SGAL…VKEI), and 241 to 324 (KRWG…VKRF). The ADP site is built by Arg108 and Lys120. Arg264 is an ADP binding site. A Substrate recognition motif is present at residues 264-269 (RRRIMM).

This sequence belongs to the mitochondrial carrier (TC 2.A.29) family. In terms of assembly, monomer.

The protein localises to the membrane. It carries out the reaction ADP(in) + ATP(out) = ADP(out) + ATP(in). Its function is as follows. ADP:ATP antiporter that catalyzes the exchange of ADP and ATP across the membrane. The sequence is that of Probable ADP,ATP carrier protein At5g56450 from Arabidopsis thaliana (Mouse-ear cress).